Consider the following 161-residue polypeptide: Transcription antitermination protein NusB (161 aa).

Residues methionine 1–serine 22 are disordered.

This sequence belongs to the NusB family.

Functionally, involved in transcription antitermination. Required for transcription of ribosomal RNA (rRNA) genes. Binds specifically to the boxA antiterminator sequence of the ribosomal RNA (rrn) operons. The sequence is that of Transcription antitermination protein NusB from Hydrogenovibrio crunogenus (strain DSM 25203 / XCL-2) (Thiomicrospira crunogena).